The primary structure comprises 277 residues: Ribonuclease HII (277 aa).

Residues 1–32 are disordered; the sequence is MIRNQANKPGRAKAATAARKSPLTKSAAKPAA. Over residues 20–32 the composition is skewed to low complexity; the sequence is KSPLTKSAAKPAA. Residues 64–252 enclose the RNase H type-2 domain; the sequence is WPVAGCDEAG…VVAARRKHQP (189 aa). Residues aspartate 70, glutamate 71, and aspartate 161 each contribute to the a divalent metal cation site.

It belongs to the RNase HII family. It depends on Mn(2+) as a cofactor. Requires Mg(2+) as cofactor.

It is found in the cytoplasm. It catalyses the reaction Endonucleolytic cleavage to 5'-phosphomonoester.. Endonuclease that specifically degrades the RNA of RNA-DNA hybrids. In Bradyrhizobium sp. (strain ORS 278), this protein is Ribonuclease HII.